Here is a 296-residue protein sequence, read N- to C-terminus: Phosphoribosylaminoimidazole-succinocarboxamide synthase (296 aa).

This sequence belongs to the SAICAR synthetase family.

It carries out the reaction 5-amino-1-(5-phospho-D-ribosyl)imidazole-4-carboxylate + L-aspartate + ATP = (2S)-2-[5-amino-1-(5-phospho-beta-D-ribosyl)imidazole-4-carboxamido]succinate + ADP + phosphate + 2 H(+). It participates in purine metabolism; IMP biosynthesis via de novo pathway; 5-amino-1-(5-phospho-D-ribosyl)imidazole-4-carboxamide from 5-amino-1-(5-phospho-D-ribosyl)imidazole-4-carboxylate: step 1/2. This is Phosphoribosylaminoimidazole-succinocarboxamide synthase from Pelobacter propionicus (strain DSM 2379 / NBRC 103807 / OttBd1).